The following is a 168-amino-acid chain: ATP synthase subunit b (168 aa).

The helical transmembrane segment at Ala9–Leu29 threads the bilayer.

This sequence belongs to the ATPase B chain family. In terms of assembly, F-type ATPases have 2 components, F(1) - the catalytic core - and F(0) - the membrane proton channel. F(1) has five subunits: alpha(3), beta(3), gamma(1), delta(1), epsilon(1). F(0) has three main subunits: a(1), b(2) and c(10-14). The alpha and beta chains form an alternating ring which encloses part of the gamma chain. F(1) is attached to F(0) by a central stalk formed by the gamma and epsilon chains, while a peripheral stalk is formed by the delta and b chains.

It localises to the cell membrane. F(1)F(0) ATP synthase produces ATP from ADP in the presence of a proton or sodium gradient. F-type ATPases consist of two structural domains, F(1) containing the extramembraneous catalytic core and F(0) containing the membrane proton channel, linked together by a central stalk and a peripheral stalk. During catalysis, ATP synthesis in the catalytic domain of F(1) is coupled via a rotary mechanism of the central stalk subunits to proton translocation. Its function is as follows. Component of the F(0) channel, it forms part of the peripheral stalk, linking F(1) to F(0). This Bacillus thuringiensis (strain Al Hakam) protein is ATP synthase subunit b.